The following is a 679-amino-acid chain: Glycine--tRNA ligase beta subunit (679 aa).

This sequence belongs to the class-II aminoacyl-tRNA synthetase family. In terms of assembly, tetramer of two alpha and two beta subunits.

It is found in the cytoplasm. The enzyme catalyses tRNA(Gly) + glycine + ATP = glycyl-tRNA(Gly) + AMP + diphosphate. The sequence is that of Glycine--tRNA ligase beta subunit from Streptococcus pyogenes serotype M2 (strain MGAS10270).